The chain runs to 161 residues: Regulatory protein RecX (161 aa).

It belongs to the RecX family.

Its subcellular location is the cytoplasm. In terms of biological role, modulates RecA activity. This Thermotoga petrophila (strain ATCC BAA-488 / DSM 13995 / JCM 10881 / RKU-1) protein is Regulatory protein RecX.